We begin with the raw amino-acid sequence, 181 residues long: Adenine phosphoribosyltransferase (181 aa).

This sequence belongs to the purine/pyrimidine phosphoribosyltransferase family. In terms of assembly, homodimer.

The protein localises to the cytoplasm. The catalysed reaction is AMP + diphosphate = 5-phospho-alpha-D-ribose 1-diphosphate + adenine. It functions in the pathway purine metabolism; AMP biosynthesis via salvage pathway; AMP from adenine: step 1/1. In terms of biological role, catalyzes a salvage reaction resulting in the formation of AMP, that is energically less costly than de novo synthesis. The chain is Adenine phosphoribosyltransferase from Methylorubrum populi (strain ATCC BAA-705 / NCIMB 13946 / BJ001) (Methylobacterium populi).